Reading from the N-terminus, the 121-residue chain is Large ribosomal subunit protein uL14 (121 aa).

The protein belongs to the universal ribosomal protein uL14 family. In terms of assembly, part of the 50S ribosomal subunit. Forms a cluster with proteins L3 and L19. In the 70S ribosome, L14 and L19 interact and together make contacts with the 16S rRNA in bridges B5 and B8.

In terms of biological role, binds to 23S rRNA. Forms part of two intersubunit bridges in the 70S ribosome. The polypeptide is Large ribosomal subunit protein uL14 (Prochlorococcus marinus (strain MIT 9515)).